Consider the following 286-residue polypeptide: Replication protein RepA (286 aa).

This sequence belongs to the initiator RepB protein family.

Its function is as follows. RepA is essential for origin function, autoregulates its own synthesis from the promoter, and, when overproduced, blocks origin function. The chain is Replication protein RepA (repA) from Escherichia coli.